The primary structure comprises 160 residues: Lipoprotein signal peptidase (160 aa).

3 consecutive transmembrane segments (helical) span residues 7–27 (VIYY…KWLV), 61–81 (GQFW…IIYI), and 91–111 (AGIG…DRVF). Active-site residues include Asp117 and Asp135. Residues 133 to 153 (IADSALTVGVILLFIHMFFFA) form a helical membrane-spanning segment.

The protein belongs to the peptidase A8 family.

The protein resides in the cell membrane. The enzyme catalyses Release of signal peptides from bacterial membrane prolipoproteins. Hydrolyzes -Xaa-Yaa-Zaa-|-(S,diacylglyceryl)Cys-, in which Xaa is hydrophobic (preferably Leu), and Yaa (Ala or Ser) and Zaa (Gly or Ala) have small, neutral side chains.. The protein operates within protein modification; lipoprotein biosynthesis (signal peptide cleavage). In terms of biological role, this protein specifically catalyzes the removal of signal peptides from prolipoproteins. This Geobacillus thermodenitrificans (strain NG80-2) protein is Lipoprotein signal peptidase.